Consider the following 314-residue polypeptide: MNILLANPRGFCAGVDRAISIVELALEIHGAPIYVRHEVVHNRFVVDGLKAKGAVFVEELDEVPDGAIVIFSAHGVSQEVRQEAKRRDLKVFDATCPLVTKVHMQVARASKKGTKAILIGHEGHPEVIGTMGQYDNQDAGIFLVESVEDIAKLPVSSQDDLTFMTQTTLSIDDTSDVIEALKEKYPAIQGPRKNDICYATTNRQQAVRELAKQSQLVLVVGSKNSSNSNRLAELASRMGVPSKLIDGPQDIDPSWLDGVETIGITAGASAPEVLVQSVVEHLKTLGVTGVSNLEGCEENMVFEVPKELRIHEVK.

Residue cysteine 12 participates in [4Fe-4S] cluster binding. 2 residues coordinate (2E)-4-hydroxy-3-methylbut-2-enyl diphosphate: histidine 41 and histidine 74. Residues histidine 41 and histidine 74 each coordinate dimethylallyl diphosphate. Histidine 41 and histidine 74 together coordinate isopentenyl diphosphate. Residue cysteine 96 participates in [4Fe-4S] cluster binding. Residue histidine 124 participates in (2E)-4-hydroxy-3-methylbut-2-enyl diphosphate binding. Histidine 124 lines the dimethylallyl diphosphate pocket. Histidine 124 serves as a coordination point for isopentenyl diphosphate. Residue glutamate 126 is the Proton donor of the active site. Threonine 167 is a (2E)-4-hydroxy-3-methylbut-2-enyl diphosphate binding site. A [4Fe-4S] cluster-binding site is contributed by cysteine 197. Serine 225, serine 226, asparagine 227, and serine 269 together coordinate (2E)-4-hydroxy-3-methylbut-2-enyl diphosphate. The dimethylallyl diphosphate site is built by serine 225, serine 226, asparagine 227, and serine 269. Isopentenyl diphosphate contacts are provided by serine 225, serine 226, asparagine 227, and serine 269.

It belongs to the IspH family. It depends on [4Fe-4S] cluster as a cofactor.

It carries out the reaction isopentenyl diphosphate + 2 oxidized [2Fe-2S]-[ferredoxin] + H2O = (2E)-4-hydroxy-3-methylbut-2-enyl diphosphate + 2 reduced [2Fe-2S]-[ferredoxin] + 2 H(+). The enzyme catalyses dimethylallyl diphosphate + 2 oxidized [2Fe-2S]-[ferredoxin] + H2O = (2E)-4-hydroxy-3-methylbut-2-enyl diphosphate + 2 reduced [2Fe-2S]-[ferredoxin] + 2 H(+). The protein operates within isoprenoid biosynthesis; dimethylallyl diphosphate biosynthesis; dimethylallyl diphosphate from (2E)-4-hydroxy-3-methylbutenyl diphosphate: step 1/1. It functions in the pathway isoprenoid biosynthesis; isopentenyl diphosphate biosynthesis via DXP pathway; isopentenyl diphosphate from 1-deoxy-D-xylulose 5-phosphate: step 6/6. Its function is as follows. Catalyzes the conversion of 1-hydroxy-2-methyl-2-(E)-butenyl 4-diphosphate (HMBPP) into a mixture of isopentenyl diphosphate (IPP) and dimethylallyl diphosphate (DMAPP). Acts in the terminal step of the DOXP/MEP pathway for isoprenoid precursor biosynthesis. The sequence is that of 4-hydroxy-3-methylbut-2-enyl diphosphate reductase from Actinobacillus pleuropneumoniae serotype 3 (strain JL03).